Reading from the N-terminus, the 460-residue chain is Argininosuccinate lyase (460 aa).

Belongs to the lyase 1 family. Argininosuccinate lyase subfamily.

It localises to the cytoplasm. The catalysed reaction is 2-(N(omega)-L-arginino)succinate = fumarate + L-arginine. It participates in amino-acid biosynthesis; L-arginine biosynthesis; L-arginine from L-ornithine and carbamoyl phosphate: step 3/3. This is Argininosuccinate lyase from Desulforamulus reducens (strain ATCC BAA-1160 / DSM 100696 / MI-1) (Desulfotomaculum reducens).